The following is a 375-amino-acid chain: tRNA-specific 2-thiouridylase MnmA (375 aa).

Residues 18-25 and Met44 each bind ATP; that span reads GMSGGVDS. Residues 104–106 form an interaction with target base in tRNA region; sequence NPD. Cys109 (nucleophile) is an active-site residue. A disulfide bond links Cys109 and Cys206. Gly134 provides a ligand contact to ATP. Residues 156–158 form an interaction with tRNA region; sequence KDQ. Cys206 functions as the Cysteine persulfide intermediate in the catalytic mechanism. An interaction with tRNA region spans residues 318-319; that stretch reads RY.

Belongs to the MnmA/TRMU family.

It localises to the cytoplasm. It catalyses the reaction S-sulfanyl-L-cysteinyl-[protein] + uridine(34) in tRNA + AH2 + ATP = 2-thiouridine(34) in tRNA + L-cysteinyl-[protein] + A + AMP + diphosphate + H(+). In terms of biological role, catalyzes the 2-thiolation of uridine at the wobble position (U34) of tRNA, leading to the formation of s(2)U34. The protein is tRNA-specific 2-thiouridylase MnmA of Colwellia psychrerythraea (strain 34H / ATCC BAA-681) (Vibrio psychroerythus).